A 292-amino-acid polypeptide reads, in one-letter code: Peroxidase 2 (292 aa).

4 cysteine pairs are disulfide-bonded: cysteine 7-cysteine 86, cysteine 40-cysteine 45, cysteine 92-cysteine 288, and cysteine 171-cysteine 199. The active-site Proton acceptor is histidine 38. Positions 39, 42, 44, 46, and 48 each coordinate Ca(2+). Residue asparagine 68 is glycosylated (N-linked (GlcNAc...) asparagine). Proline 134 contacts substrate. An N-linked (GlcNAc...) asparagine glycan is attached at asparagine 139. Position 164 (histidine 164) interacts with heme b. Threonine 165 contacts Ca(2+). Asparagine 179 carries an N-linked (GlcNAc...) asparagine glycan. Aspartate 210, threonine 213, and aspartate 218 together coordinate Ca(2+).

The protein belongs to the peroxidase family. Classical plant (class III) peroxidase subfamily. It depends on Ca(2+) as a cofactor. Heme b serves as cofactor.

It carries out the reaction 2 a phenolic donor + H2O2 = 2 a phenolic radical donor + 2 H2O. In terms of biological role, removal of H(2)O(2), oxidation of toxic reductants, biosynthesis and degradation of lignin, suberization, auxin catabolism, response to environmental stresses such as wounding, pathogen attack and oxidative stress. These functions might be dependent on each isozyme/isoform in each plant tissue. The chain is Peroxidase 2 from Cucumis sativus (Cucumber).